The chain runs to 84 residues: Magnetosome protein MamG (84 aa).

The Cytoplasmic portion of the chain corresponds to 1–3 (MIK). The helical transmembrane segment at 4–24 (GIAGVGGTALGVGGGVAAPPV) threads the bilayer. Residues 25-40 (SAAAVGSTLLAGKGVC) are Lumenal-facing. An LG repeat region spans residues 41 to 48 (LGLGLGLG). A helical membrane pass occupies residues 41–61 (LGLGLGLGAWGPVLLGVAGLA). The Cytoplasmic portion of the chain corresponds to 62-84 (CAASLCDYLKNRKAQAEASAEPA).

The protein belongs to the magnetosome MamG (TC 9.B.95) protein family.

It is found in the magnetosome membrane. Functionally, plays a role in regulating magnetite crystal size. In Magnetospirillum gryphiswaldense (strain DSM 6361 / JCM 21280 / NBRC 15271 / MSR-1), this protein is Magnetosome protein MamG.